Consider the following 1574-residue polypeptide: DNA-directed RNA polymerase subunit beta' (1574 aa).

Zn(2+) contacts are provided by cysteine 64, cysteine 66, cysteine 79, and cysteine 82. Mg(2+)-binding residues include aspartate 590, aspartate 592, and aspartate 594. Cysteine 928, cysteine 1002, cysteine 1009, and cysteine 1012 together coordinate Zn(2+).

It belongs to the RNA polymerase beta' chain family. As to quaternary structure, the RNAP catalytic core consists of 2 alpha, 1 beta, 1 beta' and 1 omega subunit. When a sigma factor is associated with the core the holoenzyme is formed, which can initiate transcription. It depends on Mg(2+) as a cofactor. Zn(2+) is required as a cofactor.

It catalyses the reaction RNA(n) + a ribonucleoside 5'-triphosphate = RNA(n+1) + diphosphate. Functionally, DNA-dependent RNA polymerase catalyzes the transcription of DNA into RNA using the four ribonucleoside triphosphates as substrates. This chain is DNA-directed RNA polymerase subunit beta', found in Aquifex aeolicus (strain VF5).